We begin with the raw amino-acid sequence, 492 residues long: GlcNAc-binding protein A (492 aa).

An N-terminal signal peptide occupies residues methionine 1 to alanine 23. Positions histidine 24–phenylalanine 204 constitute a Chitin-binding type-4 domain. The Chitin-binding type-3 domain occupies alanine 443–tryptophan 484.

It belongs to the GbpA family.

The protein resides in the secreted. In terms of biological role, probably interacts with GlcNAc residues. May promote attachment to both epithelial cell surfaces and chitin. In Aliivibrio fischeri (strain MJ11) (Vibrio fischeri), this protein is GlcNAc-binding protein A.